The following is a 339-amino-acid chain: Protein FAM50A (339 aa).

A disordered region spans residues 1–31 (MAQYKGAASEAGRAMHLMKKREKQREQMEQM). An N-acetylalanine modification is found at Ala2. Residue Lys100 forms a Glycyl lysine isopeptide (Lys-Gly) (interchain with G-Cter in SUMO2) linkage. Residues 121-177 (SFTLEEEEEGGEEEEEAAMYEEEMEREEITTKKRKLGKNPDVDTSFLPDRDREEEEN) are disordered. The span at 124–146 (LEEEEEGGEEEEEAAMYEEEMER) shows a compositional bias: acidic residues. The short motif at 152 to 155 (KKRK) is the Nuclear localization signal element. Residues 168-177 (PDRDREEEEN) are compositionally biased toward basic and acidic residues.

The protein belongs to the FAM50 family. Interacts with EFTUD2, a component of the spliceosome U5 complex. Interacts with DDX41, a component of the spliceosome C complex. As to expression, widely expressed in fetal and adult tissues. Mostly abundant in fetal brain, liver and kidney; in the adult, high levels were also observed in heart, skeletal muscle, spleen, thymus, prostate and small intestine. Expressed in fetal cerebellum and hypothalamus. Low expression is observed in fetal temporal lobe.

Its subcellular location is the nucleus. Functionally, probably involved in the regulation of pre-mRNA splicing. The sequence is that of Protein FAM50A (FAM50A) from Homo sapiens (Human).